The sequence spans 215 residues: NAD(P)H-quinone oxidoreductase subunit I (215 aa).

4Fe-4S ferredoxin-type domains are found at residues 55 to 84 (GRIH…VDWV) and 95 to 124 (RNYS…MTEE). [4Fe-4S] cluster is bound by residues Cys64, Cys67, Cys70, Cys74, Cys104, Cys107, Cys110, and Cys114. The segment at 166–215 (AGEMDPHGVPNDRPRAGQLPSQVLETLAPPAKVGAKNEGQSTGTTQEGEA) is disordered. Residues 169–180 (MDPHGVPNDRPR) show a composition bias toward basic and acidic residues. A compositionally biased stretch (polar residues) spans 203–215 (EGQSTGTTQEGEA).

This sequence belongs to the complex I 23 kDa subunit family. In terms of assembly, NDH-1 is composed of at least 11 different subunits. It depends on [4Fe-4S] cluster as a cofactor.

Its subcellular location is the cellular thylakoid membrane. It carries out the reaction a plastoquinone + NADH + (n+1) H(+)(in) = a plastoquinol + NAD(+) + n H(+)(out). It catalyses the reaction a plastoquinone + NADPH + (n+1) H(+)(in) = a plastoquinol + NADP(+) + n H(+)(out). Functionally, NDH-1 shuttles electrons from an unknown electron donor, via FMN and iron-sulfur (Fe-S) centers, to quinones in the respiratory and/or the photosynthetic chain. The immediate electron acceptor for the enzyme in this species is believed to be plastoquinone. Couples the redox reaction to proton translocation, and thus conserves the redox energy in a proton gradient. The polypeptide is NAD(P)H-quinone oxidoreductase subunit I (Parasynechococcus marenigrum (strain WH8102)).